The sequence spans 374 residues: Carbamoyl phosphate synthase small chain (374 aa).

Positions methionine 1 to proline 186 are CPSase. 3 residues coordinate L-glutamine: serine 47, glycine 237, and glycine 239. The Glutamine amidotransferase type-1 domain maps to lysine 189–serine 374. The active-site Nucleophile is the cysteine 265. L-glutamine contacts are provided by leucine 266, glutamine 269, asparagine 307, glycine 309, and phenylalanine 310. Residues histidine 349 and glutamate 351 contribute to the active site.

It belongs to the CarA family. As to quaternary structure, composed of two chains; the small (or glutamine) chain promotes the hydrolysis of glutamine to ammonia, which is used by the large (or ammonia) chain to synthesize carbamoyl phosphate. Tetramer of heterodimers (alpha,beta)4.

It carries out the reaction hydrogencarbonate + L-glutamine + 2 ATP + H2O = carbamoyl phosphate + L-glutamate + 2 ADP + phosphate + 2 H(+). The catalysed reaction is L-glutamine + H2O = L-glutamate + NH4(+). Its pathway is amino-acid biosynthesis; L-arginine biosynthesis; carbamoyl phosphate from bicarbonate: step 1/1. The protein operates within pyrimidine metabolism; UMP biosynthesis via de novo pathway; (S)-dihydroorotate from bicarbonate: step 1/3. Small subunit of the glutamine-dependent carbamoyl phosphate synthetase (CPSase). CPSase catalyzes the formation of carbamoyl phosphate from the ammonia moiety of glutamine, carbonate, and phosphate donated by ATP, constituting the first step of 2 biosynthetic pathways, one leading to arginine and/or urea and the other to pyrimidine nucleotides. The small subunit (glutamine amidotransferase) binds and cleaves glutamine to supply the large subunit with the substrate ammonia. The protein is Carbamoyl phosphate synthase small chain of Xylella fastidiosa (strain 9a5c).